A 124-amino-acid chain; its full sequence is Holo-[acyl-carrier-protein] synthase (124 aa).

The Mg(2+) site is built by D8 and E56.

Belongs to the P-Pant transferase superfamily. AcpS family. Requires Mg(2+) as cofactor.

The protein localises to the cytoplasm. The catalysed reaction is apo-[ACP] + CoA = holo-[ACP] + adenosine 3',5'-bisphosphate + H(+). Its function is as follows. Transfers the 4'-phosphopantetheine moiety from coenzyme A to a Ser of acyl-carrier-protein. The sequence is that of Holo-[acyl-carrier-protein] synthase from Maridesulfovibrio salexigens (strain ATCC 14822 / DSM 2638 / NCIMB 8403 / VKM B-1763) (Desulfovibrio salexigens).